The chain runs to 317 residues: Probable cell division protein WhiA (317 aa).

The H-T-H motif DNA-binding region spans 281–314 (SLKELGKMLEPPVGKSGVNHRLRKIEKIAEELRK).

This sequence belongs to the WhiA family.

Functionally, involved in cell division and chromosome segregation. The sequence is that of Probable cell division protein WhiA from Clostridium acetobutylicum (strain ATCC 824 / DSM 792 / JCM 1419 / IAM 19013 / LMG 5710 / NBRC 13948 / NRRL B-527 / VKM B-1787 / 2291 / W).